A 271-amino-acid chain; its full sequence is Interleukin-1 alpha (271 aa).

Residues 1 to 112 (MAKVPDMFED…DSEEEIIKPR (112 aa)) constitute a propeptide that is removed on maturation. The residue at position 82 (Lys82) is an N6-acetyllysine. N6-myristoyl lysine attachment occurs at residues Lys82 and Lys83. Residues 82 to 86 (KKRRL) are nuclear localization signal (NLS). Ser87 carries the post-translational modification Phosphoserine. N-linked (GlcNAc...) asparagine glycosylation is found at Asn102 and Asn141.

This sequence belongs to the IL-1 family. As to quaternary structure, monomer. Interacts with TMED10; the interaction mediates the translocation from the cytoplasm into the ERGIC (endoplasmic reticulum-Golgi intermediate compartment) and thereby secretion. Interacts with IL1R1. Interacts with S100A13; this interaction is the first step in the export of IL1A, followed by direct translocation of this complex across the plasma membrane. Post-translationally, acetylated within its nuclear localization sequence, which impacts subcellular localization. Proteolytic processed by CAPN1 in a calcium-dependent manner. Cleavage from 31 kDa precursor to 18 kDa biologically active molecules. In terms of processing, phosphorylated. Phosphorylation greatly enhances susceptibility to digestion and promotes the conversion of pre-IL1A alpha to the biologically active IL1A.

It is found in the nucleus. The protein resides in the cytoplasm. It localises to the secreted. Its function is as follows. Cytokine constitutively present intracellularly in nearly all resting non-hematopoietic cells that plays an important role in inflammation and bridges the innate and adaptive immune systems. After binding to its receptor IL1R1 together with its accessory protein IL1RAP, forms the high affinity interleukin-1 receptor complex. Signaling involves the recruitment of adapter molecules such as MYD88, IRAK1 or IRAK4. In turn, mediates the activation of NF-kappa-B and the three MAPK pathways p38, p42/p44 and JNK pathways. Within the cell, acts as an alarmin and cell death results in its liberation in the extracellular space after disruption of the cell membrane to induce inflammation and alert the host to injury or damage. In addition to its role as a danger signal, which occurs when the cytokine is passively released by cell necrosis, directly senses DNA damage and acts as a signal for genotoxic stress without loss of cell integrity. The polypeptide is Interleukin-1 alpha (IL1A) (Homo sapiens (Human)).